The sequence spans 247 residues: Capsid protein (247 aa).

Residues 1-40 form a DNA-binding region; sequence MWGTSNCACAKFQIRRRYARPYRRRHIRRYRRRRRHFRRR. Positions 15-44 are nuclear localization signals; sequence RRRYARPYRRRHIRRYRRRRRHFRRRRFTT.

This sequence belongs to the circoviridae capsid protein family. Homomultimer. Assembles in the nucleus, presumably in an immature form, then migrates to the cytoplasm once assembled as mature virion. Interacts with Rep; this interaction relocates Rep into the nucleus.

It localises to the host nucleus. Its subcellular location is the virion. Self-assembles to form the virion icosahedral capsid with a T=1 symmetry. This very small capsid (17 - 22 nm in diameter) allows the virus to be very stable in the environment and resistant to some disinfectants, including detergents. Essential for the initial attachment to heparan sulfate moieties and chondroitin sulfate B of the host cell surface proteoglycans. After attachment, the virus is endocytosed and traffics to the nucleus. The capsid protein binds and transports the viral genome and Rep across the nuclear envelope. This is Capsid protein (Cap) from Beak and feather disease virus (BFDV).